Consider the following 376-residue polypeptide: Deoxyhypusine synthase (376 aa).

NAD(+)-binding positions include 112–116 (SNLVS), 138–140 (TAG), glutamate 144, and aspartate 245. 143-144 (EE) serves as a coordination point for spermidine. Residue aspartate 250 coordinates spermidine. Glycine 292 lines the NAD(+) pocket. Histidine 297 contributes to the spermidine binding site. 317 to 318 (TA) lines the NAD(+) pocket. Residues 323–325 (GSD) and 332–338 (EAISWGK) contribute to the spermidine site. The active-site Nucleophile is the lysine 338. 351-352 (DA) is a binding site for NAD(+).

Belongs to the deoxyhypusine synthase family. It depends on NAD(+) as a cofactor.

The enzyme catalyses [eIF5A protein]-L-lysine + spermidine = [eIF5A protein]-deoxyhypusine + propane-1,3-diamine. It participates in protein modification; eIF5A hypusination. Functionally, catalyzes the NAD-dependent oxidative cleavage of spermidine and the subsequent transfer of the butylamine moiety of spermidine to the epsilon-amino group of a specific lysine residue of the eIF-5A precursor protein to form the intermediate deoxyhypusine residue. Also able to produce homospermidine from putrescine. In Musa acuminata (Banana), this protein is Deoxyhypusine synthase (DHS).